The primary structure comprises 277 residues: Shikimate dehydrogenase (NADP(+)) (277 aa).

Shikimate contacts are provided by residues 15–17 (SLS) and Thr-62. The active-site Proton acceptor is Lys-66. 2 residues coordinate shikimate: Asn-87 and Asp-102. Residues 127 to 131 (GAGGA), 151 to 156 (NRTVDK), and Ile-219 contribute to the NADP(+) site. Residue Tyr-221 coordinates shikimate. Gly-242 lines the NADP(+) pocket.

Belongs to the shikimate dehydrogenase family. Homodimer.

The enzyme catalyses shikimate + NADP(+) = 3-dehydroshikimate + NADPH + H(+). It functions in the pathway metabolic intermediate biosynthesis; chorismate biosynthesis; chorismate from D-erythrose 4-phosphate and phosphoenolpyruvate: step 4/7. Involved in the biosynthesis of the chorismate, which leads to the biosynthesis of aromatic amino acids. Catalyzes the reversible NADPH linked reduction of 3-dehydroshikimate (DHSA) to yield shikimate (SA). This is Shikimate dehydrogenase (NADP(+)) from Bacillus cereus (strain AH187).